Reading from the N-terminus, the 162-residue chain is Non-specific lipid transfer protein GPI-anchored 27 (162 aa).

The N-terminal stretch at M1–A29 is a signal peptide. Intrachain disulfides connect C39–C78, C50–C62, C63–C102, and C76–C110. N68 carries N-linked (GlcNAc...) asparagine glycosylation. Residues N124 and N135 are each glycosylated (N-linked (GlcNAc...) asparagine). A lipid anchor (GPI-anchor amidated serine) is attached at S137. A propeptide spans V138–F162 (removed in mature form).

The protein belongs to the plant LTP family.

It is found in the cell membrane. Probable lipid transfer protein. This is Non-specific lipid transfer protein GPI-anchored 27 from Arabidopsis thaliana (Mouse-ear cress).